The chain runs to 31 residues: TCKQKGEGCSLDVECCSSSCKPGGPLFDFDC.

3 cysteine pairs are disulfide-bonded: cysteine 2–cysteine 16, cysteine 9–cysteine 20, and cysteine 15–cysteine 31. Glutamate 14 carries the post-translational modification 4-carboxyglutamate.

It belongs to the conotoxin O1 superfamily. As to expression, expressed by the venom duct.

The protein localises to the secreted. Its function is as follows. Gamma-conotoxins may act on voltage-gated non-specific cation pacemaker channels (HCN). Elicits toxic effects in the freshwater snail Pomacea paludosa after intramuscular injection, but it has no effect when injected intracerebrally into mice. This chain is Gamma-conotoxin-like As7a, found in Conus cancellatus (Cancellate cone).